We begin with the raw amino-acid sequence, 1580 residues long: Ras GTPase-activating protein raskol (1580 aa).

Position 164 is a phosphoserine (Ser-164). At Thr-167 the chain carries Phosphothreonine. The segment at 197 to 223 (LKRTKSVTKLERTKRGSGGLRGSRSHE) is disordered. Residues Ser-221 and Ser-224 each carry the phosphoserine modification. The region spanning 233–291 (STIDLSCTGAVGVAPVHQSVLGRRHCFQVRGGPRGERYYSCGSRQERDLWIYSLRKSIA) is the PH domain. The region spanning 282-400 (WIYSLRKSIA…TSRLPCEQWY (119 aa)) is the C2 domain. The region spanning 490–700 (GLAGAFLTDV…ARMQQFLEII (211 aa)) is the Ras-GAP domain. Disordered stretches follow at residues 764 to 819 (GMGT…QPQH), 857 to 892 (LLQQ…HQHP), 904 to 1023 (AGNQ…SYDD), 1112 to 1218 (ANHH…QQFG), 1284 to 1313 (LSGG…YGRL), 1334 to 1443 (VGYG…LGKS), and 1561 to 1580 (YETQ…QKPQ). Polar residues predominate over residues 776–805 (ATSSTHSIASENQENRNPGSSGSHAGSNSE). 3 stretches are compositionally biased toward low complexity: residues 806 to 818 (QLLP…AQPQ), 857 to 885 (LLQQ…GHQQ), and 926 to 939 (SSSL…LLHG). Residues 940–954 (HQQHAHHPQQLHPHH) show a composition bias toward basic residues. Residues 987–1020 (TSTPSSTRSRTLPRNGNPNANGNVGSSNNNQSGS) show a composition bias toward low complexity. Residues 1140–1150 (SAKSSHCSSGY) are compositionally biased toward polar residues. Residues 1151–1169 (QSISTNPSPSQSSSPVESQ) show a composition bias toward low complexity. 2 positions are modified to phosphoserine: Ser-1158 and Ser-1164. Positions 1186 to 1206 (PSYQLQPQTGSSRSSAQSNTH) are enriched in polar residues. Low complexity-rich tracts occupy residues 1207 to 1216 (QQQQQQQQQQ), 1285 to 1299 (SGGS…ASTS), and 1351 to 1362 (HQQQQNPMQQQQ). A compositionally biased stretch (basic and acidic residues) spans 1363–1372 (QRERDQEHKQ). The span at 1374-1388 (AGSVAGSVGSATSAA) shows a compositional bias: low complexity. Polar residues predominate over residues 1396–1415 (SARTLSDSSTDTEGHCNQLQ). Ser-1401 and Ser-1403 each carry phosphoserine. A compositionally biased stretch (gly residues) spans 1427–1438 (GGSGGGGAGSEQ). Over residues 1563–1580 (TQQQQQQHQAPPKTQKPQ) the composition is skewed to low complexity.

It localises to the cytoplasm. The protein localises to the cell membrane. Its subcellular location is the apical cell membrane. GTPase-activating protein, which acts as a negative regulator for some members of the Ras family. Probably decreases their signaling activity by stimulating their intrinsic GTPase activity, thereby lowering the levels of the GTP-bound active form. Functions with DE-cadherin (shg) to promote embryonic border cell (BC) migration and adhesion by regulating the distribution of actin protrusions in BCs. Promotes shg-mediated adhesion at the BC interfaces and likely maintains BC cluster adhesion during BC detachment from the follicular epithelium and subsequent BC migration. Also required for restricting the development of actin-rich protrusions to the front of migrating BC clusters thus ensuring unidirectional BC migration. Possibly functions by suppressing Rac1 signaling in non-leading BCs, thus limiting its activity to leading BCs where it initiates localized actin cytoskeleton remodeling to produce the polarized protrusions. The sequence is that of Ras GTPase-activating protein raskol from Drosophila melanogaster (Fruit fly).